Reading from the N-terminus, the 134-residue chain is DNA-binding protein inhibitor ID-2 (134 aa).

Phosphoserine is present on residues serine 14 and serine 25. The 53-residue stretch at 23–75 (SRSKTPVDDPMSLLYNMNDCYSKLKELVPSIPQNKKVSKMEILQHVIDYILDL) folds into the bHLH domain. The Nuclear export signal motif lies at 106–115 (LNTDISILSL).

Interacts with GATA4 and NKX2-5. Interacts with NR0B2. Interacts with CLOCK and BMAL1. Interacts with IFI204. Interacts with NEDD9/HEF1. Interacts with ASB4; this interaction promotes ID2 proteasomal degradation. Post-translationally, ubiquitinated in a ASB4-depedent manner, leading to proteasomal degradation. Phosphorylated in vitro by CDK1, PKA and PKC.

The protein resides in the cytoplasm. Its subcellular location is the nucleus. In terms of biological role, transcriptional regulator (lacking a basic DNA binding domain) which negatively regulates the basic helix-loop-helix (bHLH) transcription factors by forming heterodimers and inhibiting their DNA binding and transcriptional activity. Implicated in regulating a variety of cellular processes, including cellular growth, senescence, differentiation, apoptosis, angiogenesis, and neoplastic transformation. Inhibits skeletal muscle and cardiac myocyte differentiation. Regulates the circadian clock by repressing the transcriptional activator activity of the CLOCK-BMAL1 heterodimer. Restricts the CLOCK and BMAL1 localization to the cytoplasm. Plays a role in both the input and output pathways of the circadian clock: in the input component, is involved in modulating the magnitude of photic entrainment and in the output component, contributes to the regulation of a variety of liver clock-controlled genes involved in lipid metabolism. The polypeptide is DNA-binding protein inhibitor ID-2 (ID2) (Sus scrofa (Pig)).